The following is a 277-amino-acid chain: 2,5-diketo-D-gluconic acid reductase B (277 aa).

The Proton donor role is filled by tyrosine 51. Position 109 (histidine 109) interacts with substrate. 189–242 (SPLARRSELLTEQLLQELAVVYGVTPTQVVLRWHVQLGSTPIPKSADPDRQREN) contacts NADP(+).

The protein belongs to the aldo/keto reductase family.

Its subcellular location is the cytoplasm. It catalyses the reaction 2-dehydro-D-gluconate + NADP(+) = 2,5-didehydro-D-gluconate + NADPH + H(+). Catalyzes the reduction of 2,5-diketo-D-gluconic acid (25DKG) to 2-keto-L-gulonic acid (2KLG). 25DKGR-B has higher catalytic efficiency than 25DKGR-A. This is 2,5-diketo-D-gluconic acid reductase B (dkgB) from Corynebacterium sp. (strain SHS752001).